A 201-amino-acid polypeptide reads, in one-letter code: Ras-related protein Rab-9A (201 aa).

At Ala2 the chain carries N-acetylalanine. Gly17 contacts GDP. Positions 17, 18, 19, 20, 21, 22, 34, 38, and 39 each coordinate GTP. 4 residues coordinate GDP: Gly19, Lys20, Ser21, and Ser22. Ser21 is a binding site for Mg(2+). Positions 31–42 (KFDTQLFHTIGV) match the Switch 1 motif. Positions 39 and 62 each coordinate Mg(2+). Positions 64-78 (AGQERFRSLRTPFYR) match the Switch 2 motif. 6 residues coordinate GTP: Gly65, Asn124, Lys125, Asp127, Ala155, and Lys156. Residues Asn124, Lys125, Asp127, Ala155, and Lys156 each contribute to the GDP site. Ser179 is modified (phosphoserine). Position 187 is a phosphothreonine (Thr187). S-geranylgeranyl cysteine attachment occurs at residues Cys200 and Cys201.

It belongs to the small GTPase superfamily. Rab family. Interacts (preferentially in its GTP-bound form) with GCC2 (via its GRIP domain). Interacts (GTP-bound form) with SGSM1; the GDP-bound form has much lower affinity for SGSM1. Interacts with SGSM2. The GTP-bound form but not the GDP-bound form interacts with HPS4 and BLOC-3 complex (heterodimer of HPS1 and HPS4) but does not interact with HPS1 alone. Interacts (GTP-bound form) with NDE1; two RAB9A-GTP molecules lie on the opposite sides of the NDE1 homodimer; the interaction leads to RAB9A-dynein motor tethering. Interacts (GTP-bound form) with NDEL1. Requires Mg(2+) as cofactor.

It localises to the cell membrane. Its subcellular location is the endoplasmic reticulum membrane. It is found in the golgi apparatus membrane. The protein localises to the late endosome. The protein resides in the cytoplasmic vesicle. It localises to the phagosome membrane. Its subcellular location is the phagosome. It is found in the cytoplasmic vesicle membrane. The protein localises to the melanosome. The catalysed reaction is GTP + H2O = GDP + phosphate + H(+). Its activity is regulated as follows. Regulated by guanine nucleotide exchange factors (GEFs) which promote the exchange of bound GDP for free GTP. Regulated by GTPase activating proteins (GAPs) which increase the GTP hydrolysis activity. Inhibited by GDP dissociation inhibitors (GDIs). The small GTPases Rab are key regulators of intracellular membrane trafficking, from the formation of transport vesicles to their fusion with membranes. Rabs cycle between an inactive GDP-bound form and an active GTP-bound form that is able to recruit to membranes different sets of downstream effectors directly responsible for vesicle formation, movement, tethering and fusion. RAB9A is involved in the transport of proteins between the endosomes and the trans-Golgi network (TGN). Specifically uses NDE1/NDEL1 as an effector to interact with the dynein motor complex in order to control retrograde trafficking of RAB9-associated late endosomes to the TGN. Involved in the recruitment of SGSM2 to melanosomes and is required for the proper trafficking of melanogenic enzymes TYR, TYRP1 and DCT/TYRP2 to melanosomes in melanocytes. The chain is Ras-related protein Rab-9A from Homo sapiens (Human).